An 834-amino-acid chain; its full sequence is Glycerol-3-phosphate acyltransferase (834 aa).

Positions 309 to 314 (CHRSHI) match the HXXXXD motif motif.

This sequence belongs to the GPAT/DAPAT family.

The protein localises to the cell inner membrane. The enzyme catalyses sn-glycerol 3-phosphate + an acyl-CoA = a 1-acyl-sn-glycero-3-phosphate + CoA. The protein operates within phospholipid metabolism; CDP-diacylglycerol biosynthesis; CDP-diacylglycerol from sn-glycerol 3-phosphate: step 1/3. The protein is Glycerol-3-phosphate acyltransferase of Pseudomonas aeruginosa (strain LESB58).